The following is a 234-amino-acid chain: MQTPSENTDVKMDTLDEPSAHLIEENVALPEDTFSSHLSYVLYEIAHCKPIMFMIIIIVSLISLIVLFHDNDGCTVILVMSLIVASMALMVVAAFTFGKAITEQEFMIKLLVEVIARKPAGKEWGTVAYNMNQYLFMKRLWYTPYYFYSGKKCHEFFTTLIKEVNSGSHSDSSSNSAEDTQSPVSAGKTSNGLNNFYSIRSDPILMAYVLKATQIEKEAQSEYWRKQYPDADLP.

At 1–47 (MQTPSENTDVKMDTLDEPSAHLIEENVALPEDTFSSHLSYVLYEIAH) the chain is on the cytoplasmic side. The chain crosses the membrane as a helical span at residues 48–68 (CKPIMFMIIIIVSLISLIVLF). Residues 68–75 (FHDNDGCT) are required for resistance to killer toxin K28, a protein-toxin encoded by the M28 virus. At 69–76 (HDNDGCTV) the chain is on the extracellular side. A helical membrane pass occupies residues 77-97 (ILVMSLIVASMALMVVAAFTF). Over 98–234 (GKAITEQEFM…RKQYPDADLP (137 aa)) the chain is Cytoplasmic. Residues 147–234 (FYSGKKCHEF…RKQYPDADLP (88 aa)) are required for resistance to killer toxin K28, a protein-toxin encoded by the M28 virus. The segment at 168–187 (SHSDSSSNSAEDTQSPVSAG) is disordered. Positions 177–187 (AEDTQSPVSAG) are enriched in polar residues. Residue K217 forms a Glycyl lysine isopeptide (Lys-Gly) (interchain with G-Cter in ubiquitin) linkage.

It belongs to the DUP/COS family.

Its subcellular location is the vacuole membrane. It localises to the golgi apparatus. The protein resides in the trans-Golgi network membrane. The protein localises to the endosome membrane. In terms of biological role, confers resistance to killer toxin K28, a protein-toxin encoded by the M28 virus that uses S.cerevisiae as a host. Probably acts against K28 after endocytosis of the protein-toxin. The polypeptide is Protein-toxin resistance protein KTD1 (Saccharomyces cerevisiae (strain ATCC 204508 / S288c) (Baker's yeast)).